We begin with the raw amino-acid sequence, 72 residues long: Conotoxin LvVIA (72 aa).

The signal sequence occupies residues 1 to 17 (VLIIAVLFLTASELVTA). Residues 18–41 (DYTRDKWQYRAASLRDAMRNFRDT) constitute a propeptide that is removed on maturation. 3 cysteine pairs are disulfide-bonded: C44/C58, C51/C63, and C57/C70.

It belongs to the conotoxin O1 superfamily. Expressed by the venom duct.

It is found in the secreted. In Conus lividus (Livid cone), this protein is Conotoxin LvVIA.